Here is a 344-residue protein sequence, read N- to C-terminus: AA9 family lytic polysaccharide monooxygenase D (344 aa).

An N-terminal signal peptide occupies residues 1–23 (MKTATSYAAFLLSALAALPHASA). A Cu(2+)-binding site is contributed by H24. C70 and C193 form a disulfide bridge. Residue H179 coordinates O2. Residue Y190 coordinates Cu(2+). N-linked (GlcNAc...) asparagine glycosylation is found at N201 and N207. The tract at residues 240–321 (PPLSNLVSGD…PTTSGNLSAN (82 aa)) is disordered. The segment covering 259–292 (STSSATLSGGAAPTGTASGSTPAGTSQPSSTTGT) has biased composition (low complexity). The span at 311–320 (APTTSGNLSA) shows a compositional bias: polar residues. N-linked (GlcNAc...) asparagine glycosylation occurs at N317.

It belongs to the polysaccharide monooxygenase AA9 family. Requires Cu(2+) as cofactor.

The protein resides in the secreted. The catalysed reaction is [(1-&gt;4)-beta-D-glucosyl]n+m + reduced acceptor + O2 = 4-dehydro-beta-D-glucosyl-[(1-&gt;4)-beta-D-glucosyl]n-1 + [(1-&gt;4)-beta-D-glucosyl]m + acceptor + H2O.. Functionally, lytic polysaccharide monooxygenase (LPMO) that depolymerizes crystalline and amorphous polysaccharides via the oxidation of scissile alpha- or beta-(1-4)-glycosidic bonds, yielding C1 or C4 oxidation products. Catalysis by LPMOs requires the reduction of the active-site copper from Cu(II) to Cu(I) by a reducing agent and H(2)O(2) or O(2) as a cosubstrate. This Gloeophyllum trabeum (strain ATCC 11539 / FP-39264 / Madison 617) (Brown rot fungus) protein is AA9 family lytic polysaccharide monooxygenase D.